A 1702-amino-acid polypeptide reads, in one-letter code: Immunoglobulin A1 protease autotransporter (1702 aa).

Positions 1–25 (MLNKKFKLNFIALTVAYALTPYTEA) are cleaved as a signal peptide. The Peptidase S6 domain maps to 26 to 332 (ALVRDDVDYQ…NIYKPEFAKT (307 aa)). Ser288 is a catalytic residue. The segment at 991–1411 (VEKRNQTVDT…GSDRSTVALR (421 aa)) is disordered. The span at 997–1021 (TVDTTNITTPNNIQADVPSVPSNNE) shows a compositional bias: polar residues. The segment covering 1037 to 1047 (TPSETTETVAE) has biased composition (low complexity). Residues 1049–1061 (SKQESKTVEKNEQ) are compositionally biased toward basic and acidic residues. The segment covering 1082–1095 (KANTQTNEVAQSGS) has biased composition (polar residues). Basic and acidic residues-rich tracts occupy residues 1104–1132 (EIKETAKVEKEEKAKVEKEEKAKVEKDEI) and 1150–1162 (APKEVSTDTKVEE). A run of 2 repeats spans residues 1109-1116 (AKVEKEEK) and 1117-1124 (AKVEKEEK). The tract at residues 1109 to 1124 (AKVEKEEKAKVEKEEK) is 2 X 8 AA tandem repeats of A-K-V-E-K-E-E-K. 2 stretches are compositionally biased toward polar residues: residues 1163 to 1186 (TQVQAQPQTQSTTVAAAEATSPNS) and 1207 to 1218 (VSKNQTENTTDQ). Over residues 1219 to 1234 (PTEREKTAKVETEKTQ) the composition is skewed to basic and acidic residues. Polar residues-rich tracts occupy residues 1235–1255 (EPPQVASQASPKQEQSETVQP), 1263–1305 (NVPT…TAIT), and 1316–1341 (TETAASTEDASQHKANTVADNSVANN). Positions 1360–1378 (ETSAEETTAASTDETTIAD) are enriched in low complexity. Residues 1382 to 1392 (RSKPNRRSRRS) are compositionally biased toward basic residues. Residues 1450 to 1702 (NNEGQYNVWV…TAELKLSFSF (253 aa)) form the Autotransporter domain.

The protein localises to the periplasm. It localises to the secreted. Its subcellular location is the cell surface. The protein resides in the cell outer membrane. It catalyses the reaction Cleavage of immunoglobulin A molecules at certain Pro-|-Xaa bonds in the hinge region. No small molecule substrates are known.. In terms of biological role, virulence factor; cleaves host immunoglobulin A producing intact Fc and Fab fragments. The polypeptide is Immunoglobulin A1 protease autotransporter (iga) (Haemophilus influenzae).